Reading from the N-terminus, the 785-residue chain is Potassium transporter 5 (785 aa).

The Cytoplasmic portion of the chain corresponds to 1–60 (MDGEEHQIDGDEVNNHENKLNEKKKSWGKLYRPDSFIIEAGQTPTNTGRRSLMSWRTTMS). Ser35 is modified (phosphoserine). The chain crosses the membrane as a helical span at residues 61 to 81 (LAFQSLGVVYGDIGTSPLYVY). Topologically, residues 82–97 (ASTFTDGINDKDDVVG) are extracellular. Residues 98 to 118 (VLSLIIYTITLVALLKYVFIV) traverse the membrane as a helical segment. Residues 119-184 (LQANDNGEGG…EKLENSKFAK (66 aa)) lie on the Cytoplasmic side of the membrane. Residues 185 to 205 (IILFLVTIMGTSMVIGDGILT) form a helical membrane-spanning segment. Residues 206–218 (PSISVLSAVSGIK) lie on the Extracellular side of the membrane. Residues 219–239 (SLGQNTVVGVSVAILIVLFAF) traverse the membrane as a helical segment. The Cytoplasmic segment spans residues 240–247 (QRFGTDKV). A helical transmembrane segment spans residues 248–268 (GFSFAPIILVWFTFLIGIGLF). Residues 269 to 297 (NLFKHDITVLKALNPLYIIYYFRRTGRQG) lie on the Extracellular side of the membrane. The chain crosses the membrane as a helical span at residues 298–318 (WISLGGVFLCITGTEAMFADL). Over 319–327 (GHFSVRAVQ) the chain is Cytoplasmic. The chain crosses the membrane as a helical span at residues 328–348 (ISFSCVAYPALVTIYCGQAAY). Residues 349–367 (LTKHTYNVSNTFYDSIPDP) lie on the Extracellular side of the membrane. Asn355 is a glycosylation site (N-linked (GlcNAc...) asparagine). The helical transmembrane segment at 368-388 (LYWPTFVVAVAASIIASQAMI) threads the bilayer. The Cytoplasmic segment spans residues 389-419 (SGAFSVISQSLRMGCFPRVKVVHTSAKYEGQ). Residues 420-440 (VYIPEINYLLMLACIAVTLAF) traverse the membrane as a helical segment. The Extracellular segment spans residues 441–451 (RTTEKIGHAYG). A helical transmembrane segment spans residues 452–472 (IAVVTVMVITTLMVTLIMLVI). Residues 473–476 (WKTN) are Cytoplasmic-facing. Residues 477 to 497 (IVWIAIFLVVFGSIEMLYLSS) form a helical membrane-spanning segment. At 498-501 (VMYK) the chain is on the extracellular side. Residues 502–522 (FTSGGYLPLTITVVLMAMMAI) form a helical membrane-spanning segment. The Cytoplasmic portion of the chain corresponds to 523 to 785 (WQYVHVLKYR…LLKVGMTYEL (263 aa)). The disordered stretch occupies residues 660–699 (GGEVDETDKEEEPNAETTVVPSSNYVPSSGRIGSAHSSSS). The span at 662 to 673 (EVDETDKEEEPN) shows a compositional bias: acidic residues. A compositionally biased stretch (polar residues) spans 674–686 (AETTVVPSSNYVP). A compositionally biased stretch (low complexity) spans 687–697 (SSGRIGSAHSS).

This sequence belongs to the HAK/KUP transporter (TC 2.A.72.3) family. Interacts with ILK1. Phosphorylated at the N-terminus (amino acids 1-95) by CIPK23. In terms of tissue distribution, predominantly expressed in the roots.

The protein localises to the cell membrane. High-affinity potassium transporter. Can also transport rubidium and cesium. Is essential with AKT1 for high-affinity potassium uptake in roots during seedling establishment and postgermination growth under low potassium conditions. Mediates potassium uptake by plant roots in response to low potassium conditions, by a calcium-, CBL-, and CIPK-dependent pathway. Positively regulated by the calcium sensors calcineurin B-like genes CBL1, CBL8, CBL9 and CBL10, and by phosphorylation by CIPK23. The sequence is that of Potassium transporter 5 (POT5) from Arabidopsis thaliana (Mouse-ear cress).